The primary structure comprises 727 residues: Elongation factor 2 (727 aa).

Residues 19-260 (EQIRNMGICA…MSIKHLPNPL (242 aa)) enclose the tr-type G domain. GTP is bound by residues 28-35 (AHIDHGKT), 94-98 (DTPGH), and 148-151 (NKVD). Position 603 is a diphthamide (histidine 603).

The protein belongs to the TRAFAC class translation factor GTPase superfamily. Classic translation factor GTPase family. EF-G/EF-2 subfamily.

It localises to the cytoplasm. Its function is as follows. Catalyzes the GTP-dependent ribosomal translocation step during translation elongation. During this step, the ribosome changes from the pre-translocational (PRE) to the post-translocational (POST) state as the newly formed A-site-bound peptidyl-tRNA and P-site-bound deacylated tRNA move to the P and E sites, respectively. Catalyzes the coordinated movement of the two tRNA molecules, the mRNA and conformational changes in the ribosome. The polypeptide is Elongation factor 2 (Methanococcus maripaludis (strain DSM 14266 / JCM 13030 / NBRC 101832 / S2 / LL)).